A 1066-amino-acid polypeptide reads, in one-letter code: Ubiquitin conjugation factor E4 A (1066 aa).

The disordered stretch occupies residues 33–57; that stretch reads KEQLKQQSDELPASPDDSDNSVSES. Lys-386 carries the N6-acetyllysine modification. The region spanning 987–1061 is the U-box domain; that stretch reads DACDEFLDPI…QRWLAERKQQ (75 aa).

This sequence belongs to the ubiquitin conjugation factor E4 family.

It localises to the cytoplasm. The catalysed reaction is S-ubiquitinyl-[E2 ubiquitin-conjugating enzyme]-L-cysteine + [acceptor protein]-L-lysine = [E2 ubiquitin-conjugating enzyme]-L-cysteine + N(6)-ubiquitinyl-[acceptor protein]-L-lysine.. It participates in protein modification; protein ubiquitination. Functionally, ubiquitin-protein ligase that probably functions as an E3 ligase in conjunction with specific E1 and E2 ligases. May also function as an E4 ligase mediating the assembly of polyubiquitin chains on substrates ubiquitinated by another E3 ubiquitin ligase. Mediates 'Lys-48'-linked polyubiquitination of substrates. The sequence is that of Ubiquitin conjugation factor E4 A from Pongo abelii (Sumatran orangutan).